The sequence spans 357 residues: MRQETRFKFNAYLSRVAELNGIDAGDVSKKFTVEPSVTQTLMNTMQESSDFLTRINIVPVSEMKGEKIGIGVTGSIASTTDTAGGTERQPKDFSKLASNKYECDQINFDFYIRYKTLDLWARYQDFQLRIRNAIIKRQSLDFIMAGFNGVKRAETSDRSSNPMLQDVAVGWLQKYRNEAPARVMSKVTDEEGRTTSEVIRVGKGGDYASLDALVMDATNNLIEPWYQEDPDLVVIVGRQLLADKYFPIVNKEQDNSEMLAADVIISQKRIGNLPAVRVPYFPADAMLITKLENLSIYYMDDSHRRVIEENPKLDRVENYESMNIDYVVEDYAAGCLVEKIKVGDFSTPAKATAEPGA.

A propeptide spanning residues 1-9 is cleaved from the precursor; that stretch reads MRQETRFKF.

This sequence belongs to the P2-like viruses major capsid protein family. N*, H1 and H2 all derive from full-length N protein by N-terminal processing.

Its subcellular location is the virion. P2 proheads and capsids consist primarily of N*, a 36.7 kDa protein and two minor components, H1 (39 kDa) and H2 (38.6 kDa). The chain is Capsid proteins (N) from Escherichia phage P2 (Bacteriophage P2).